A 434-amino-acid chain; its full sequence is UDP-N-acetylmuramoyl-L-alanyl-D-glutamate--2,6-diaminopimelate ligase (434 aa).

A UDP-N-acetyl-alpha-D-muramoyl-L-alanyl-D-glutamate-binding site is contributed by serine 17. Position 68 to 74 (68 to 74 (GTNGKTT)) interacts with ATP. UDP-N-acetyl-alpha-D-muramoyl-L-alanyl-D-glutamate-binding positions include 111 to 112 (TT), serine 138, glutamine 144, and arginine 146. Lysine 178 carries the N6-carboxylysine modification. Residues arginine 326, 350-353 (DNPR), glycine 401, and glutamate 405 each bind meso-2,6-diaminopimelate. The Meso-diaminopimelate recognition motif motif lies at 350 to 353 (DNPR).

The protein belongs to the MurCDEF family. MurE subfamily. Requires Mg(2+) as cofactor. Carboxylation is probably crucial for Mg(2+) binding and, consequently, for the gamma-phosphate positioning of ATP.

It localises to the cytoplasm. The catalysed reaction is UDP-N-acetyl-alpha-D-muramoyl-L-alanyl-D-glutamate + meso-2,6-diaminopimelate + ATP = UDP-N-acetyl-alpha-D-muramoyl-L-alanyl-gamma-D-glutamyl-meso-2,6-diaminopimelate + ADP + phosphate + H(+). It participates in cell wall biogenesis; peptidoglycan biosynthesis. Its function is as follows. Catalyzes the addition of meso-diaminopimelic acid to the nucleotide precursor UDP-N-acetylmuramoyl-L-alanyl-D-glutamate (UMAG) in the biosynthesis of bacterial cell-wall peptidoglycan. This Wolinella succinogenes (strain ATCC 29543 / DSM 1740 / CCUG 13145 / JCM 31913 / LMG 7466 / NCTC 11488 / FDC 602W) (Vibrio succinogenes) protein is UDP-N-acetylmuramoyl-L-alanyl-D-glutamate--2,6-diaminopimelate ligase.